A 937-amino-acid polypeptide reads, in one-letter code: AP-2 complex subunit beta (937 aa).

Residue Thr-2 is modified to N-acetylthreonine. Ser-4 carries the phosphoserine modification. An N6-acetyllysine modification is found at Lys-265. Phosphotyrosine occurs at positions 737 and 928.

Belongs to the adaptor complexes large subunit family. Adapter protein complex 2 (AP-2) is a heterotetramer composed of two large adaptins (alpha-type subunit AP2A1 or AP2A2 and beta-type subunit AP2B1), a medium adaptin (mu-type subunit AP2M1) and a small adaptin (sigma-type subunit AP2S1). Interacts with EPN1. Interacts with EPS15; clathrin competes with EPS15. Interacts with SNAP91; clathrin competes with SNAP91. Interacts with CLTC; clathrin competes with EPS15, SNAP91 and PIP5K1C. Interacts with LDLRAP1. Interacts with AMPH and BIN1. Interacts with ARF6 (GDP-bound). Interacts (dephosphorylated at Tyr-737) with ARRB1; phosphorylation of AP2B1 at Tyr-737 disrupts the interaction. Interacts with SLC2A8. Interacts with SCYL1 and SCYL2. Interacts with TGFBR1 and TGFBR2. Interacts with PIP5K1C; clathrin competes with PIP5K1C. Interacts with DENND1B. Interacts with FCHO1. Interacts with RFTN1. Interacts with KIAA1107. Together with AP2A1 or AP2A2 and AP2M1, it interacts with ADAM10; this interaction facilitates ADAM10 endocytosis from the plasma membrane during long-term potentiation in hippocampal neurons. In terms of processing, the N-terminus is blocked. Post-translationally, phosphorylation at Tyr-737 by SRC occurs at the plasma membrane in clathrin-coated vesicles (CCVs).

Its subcellular location is the cell membrane. The protein localises to the membrane. The protein resides in the coated pit. In terms of biological role, component of the adaptor protein complex 2 (AP-2). Adaptor protein complexes function in protein transport via transport vesicles in different membrane traffic pathways. Adaptor protein complexes are vesicle coat components and appear to be involved in cargo selection and vesicle formation. AP-2 is involved in clathrin-dependent endocytosis in which cargo proteins are incorporated into vesicles surrounded by clathrin (clathrin-coated vesicles, CCVs) which are destined for fusion with the early endosome. The clathrin lattice serves as a mechanical scaffold but is itself unable to bind directly to membrane components. Clathrin-associated adaptor protein (AP) complexes which can bind directly to both the clathrin lattice and to the lipid and protein components of membranes are considered to be the major clathrin adaptors contributing the CCV formation. AP-2 also serves as a cargo receptor to selectively sort the membrane proteins involved in receptor-mediated endocytosis. AP-2 seems to play a role in the recycling of synaptic vesicle membranes from the presynaptic surface. AP-2 recognizes Y-X-X-[FILMV] (Y-X-X-Phi) and [ED]-X-X-X-L-[LI] endocytosis signal motifs within the cytosolic tails of transmembrane cargo molecules. AP-2 may also play a role in maintaining normal post-endocytic trafficking through the ARF6-regulated, non-clathrin pathway. During long-term potentiation in hippocampal neurons, AP-2 is responsible for the endocytosis of ADAM10. The AP-2 beta subunit acts via its C-terminal appendage domain as a scaffolding platform for endocytic accessory proteins; at least some clathrin-associated sorting proteins (CLASPs) are recognized by their [DE]-X(1,2)-F-X-X-[FL]-X-X-X-R motif. The AP-2 beta subunit binds to clathrin heavy chain, promoting clathrin lattice assembly; clathrin displaces at least some CLASPs from AP2B1 which probably then can be positioned for further coat assembly. This is AP-2 complex subunit beta (AP2B1) from Bos taurus (Bovine).